Consider the following 198-residue polypeptide: MSYYAFEGLIPVVHPDAFVHPSAVLIGDVIVGAGVYIGPLASLRGDYGRLILEAGSNLQDGCIMHGYCDTDTIVHENGHIGHGAILHGCVVGRDALVGMNSVIMDGAVIGEESIVAAMSFVKAGFQGEARQLLVGSPARVLRQVTDQELYWKRLNTKEYQDLAIRCRTGLSETKPLTQVEENRPRLKGTTDVKPKSAQ.

A disordered region spans residues 179–198 (VEENRPRLKGTTDVKPKSAQ). A compositionally biased stretch (basic and acidic residues) spans 180-198 (EENRPRLKGTTDVKPKSAQ).

It belongs to the transferase hexapeptide repeat family.

It functions in the pathway amine and polyamine metabolism; carnitine metabolism. Its function is as follows. Overproduction of CaiE stimulates the activity of CaiB and CaiD. In Salmonella typhi, this protein is Carnitine operon protein CaiE.